Consider the following 141-residue polypeptide: Hemoglobin subunit mu (141 aa).

Residues 1 to 141 (MLSAQERAQI…VAVVLTEKYR (141 aa)) form the Globin domain. Heme b-binding residues include His-58 and His-87.

It belongs to the globin family. In terms of tissue distribution, expressed in erythroid tissues.

This is Hemoglobin subunit mu (HBM) from Homo sapiens (Human).